The following is an 83-amino-acid chain: Small ribosomal subunit protein bS16 (83 aa).

Belongs to the bacterial ribosomal protein bS16 family.

This is Small ribosomal subunit protein bS16 from Stutzerimonas stutzeri (strain A1501) (Pseudomonas stutzeri).